We begin with the raw amino-acid sequence, 507 residues long: Monoogygenase CPUR_05431 (507 aa).

It belongs to the PheA/TfdB FAD monooxygenase family. FAD is required as a cofactor.

Its pathway is pigment biosynthesis. Monoogygenase; part of the ergochrome gene cluster responsible for the typical purple-black color of the ergot sclerotia. The ergochrome gene cluster produces several ergot pigments including the yellow ergochrome secalonic acid and its derivatives, as well as the red anthraquinones endocrocin and clavorubin. The pathway begins with the synthesis of atrochrysone thioester by the polyketide synthase (PKS) CPUR_05437. The atrochrysone carboxyl ACP thioesterase CPUR_05436 then breaks the thioester bond and releases the atrochrysone carboxylic acid from CPUR_05437. The atrochrysone carboxylic acid is then converted to atrochrysone which is further transformed into emodin anthrone. The next step is performed by the anthrone oxygenase CPUR_05434 that catalyzes the oxidation of emodinanthrone to emodin. Emodin is further modified to yield monodictyphenone via several steps involving CPUR_05427, CPUR_05428, CPUR_05429 and CPUR_05430. The short chain dehydrogenase/reductase CPUR_05418 then catalyzes the C-5 ketoreduction to give the xanthone skeleton of the monomeric units. Ergochromes formation requires further dimerization steps of different xanthone units, probably catalyzed by the cytochrome P450 monooxygenase CPUR_05419. CPUR_05425, CPUR_05426 and CPUR_05431 are unique to Claviceps, thus it is likely that they are involved in further modification of xanthone units or in their dimerization. The yellow ergochromes and the red anthraquinone pigments endocrocin and clavorubin are products from the same PKS derived precursors and the latter are likely shunt products in the pathway of xanthone biosynthesis. It is proposed that atrochrysone carboxylic acid released from the PKS CPUR_05437 can also be converted to endocrocin anthrone which is further oxidized into endocrocin by CPUR_05435. Endocrocin could be then modified to clavorubin, possibly by CPUR_05423 and CPUR_05431. Clavorubin is the principal anthraquinone metabolite produced by the cluster with a much higher yield compared to endocrocin. This Claviceps purpurea (strain 20.1) (Ergot fungus) protein is Monoogygenase CPUR_05431.